The following is a 393-amino-acid chain: Sugar efflux transporter B (393 aa).

A run of 12 helical transmembrane segments spans residues 13 to 33 (FDLT…AGAL), 51 to 71 (AMVG…SQFL), 82 to 102 (KSLI…FAWN), 106 to 126 (FVLL…NPQM), 152 to 172 (VSLA…GFSF), 174 to 194 (VMYL…WLFL), 219 to 239 (LLLF…IINM), 253 to 273 (LAGV…LIAG), 283 to 303 (FLMR…LMAH), 306 to 326 (VILL…GGIG), 344 to 364 (LYTN…GIVA), and 366 to 386 (IWNY…TLFC).

This sequence belongs to the major facilitator superfamily. Set transporter family.

The protein localises to the cell inner membrane. In terms of biological role, involved in the efflux of sugars. The physiological role may be the detoxification of non-metabolizable sugar analogs. Can transport lactose and glucose. The chain is Sugar efflux transporter B (setB) from Escherichia coli (strain K12).